The sequence spans 367 residues: Quinolinate synthase (367 aa).

Iminosuccinate contacts are provided by H45 and S62. C109 provides a ligand contact to [4Fe-4S] cluster. Iminosuccinate-binding positions include 140–142 and S161; that span reads YVN. C229 is a binding site for [4Fe-4S] cluster. Iminosuccinate is bound by residues 255–257 and T272; that span reads HPE. Residue C319 coordinates [4Fe-4S] cluster.

Belongs to the quinolinate synthase family. Type 3 subfamily. It depends on [4Fe-4S] cluster as a cofactor.

The protein resides in the cytoplasm. The enzyme catalyses iminosuccinate + dihydroxyacetone phosphate = quinolinate + phosphate + 2 H2O + H(+). It functions in the pathway cofactor biosynthesis; NAD(+) biosynthesis; quinolinate from iminoaspartate: step 1/1. Catalyzes the condensation of iminoaspartate with dihydroxyacetone phosphate to form quinolinate. This chain is Quinolinate synthase, found in Geobacillus kaustophilus (strain HTA426).